The following is a 92-amino-acid chain: Signal recognition particle 19 kDa protein (92 aa).

It belongs to the SRP19 family. Part of the signal recognition particle protein translocation system, which is composed of SRP and FtsY. Archaeal SRP consists of a 7S RNA molecule of 300 nucleotides and two protein subunits: SRP54 and SRP19.

It is found in the cytoplasm. Functionally, involved in targeting and insertion of nascent membrane proteins into the cytoplasmic membrane. Binds directly to 7S RNA and mediates binding of the 54 kDa subunit of the SRP. This is Signal recognition particle 19 kDa protein from Halobacterium salinarum (strain ATCC 29341 / DSM 671 / R1).